A 77-amino-acid chain; its full sequence is Large ribosomal subunit protein eL20 (77 aa).

This sequence belongs to the eukaryotic ribosomal protein eL20 family. Part of the 50S ribosomal subunit. Binds 23S rRNA.

The polypeptide is Large ribosomal subunit protein eL20 (Thermococcus onnurineus (strain NA1)).